The primary structure comprises 122 residues: MIQMQTVLNVADNSGAKKVACIKVLGGSKRRYAGVGDVIVVAVKEAMPNSKVKKGDVMKAVIVRTAKEVRRQDGSYLKFDDNSAVLISNQMEPIGTRIFGPVARELRARQFMKIISLAPEVL.

The protein belongs to the universal ribosomal protein uL14 family. Part of the 50S ribosomal subunit. Forms a cluster with proteins L3 and L19. In the 70S ribosome, L14 and L19 interact and together make contacts with the 16S rRNA in bridges B5 and B8.

Binds to 23S rRNA. Forms part of two intersubunit bridges in the 70S ribosome. The polypeptide is Large ribosomal subunit protein uL14 (Syntrophus aciditrophicus (strain SB)).